The primary structure comprises 119 residues: Small ribosomal subunit protein bS16 (119 aa).

Over residues 89 to 103 (TTKSTKEKAATDKKA) the composition is skewed to basic and acidic residues. The tract at residues 89-119 (TTKSTKEKAATDKKAKVTKKPKTKTTTDVKK) is disordered.

Belongs to the bacterial ribosomal protein bS16 family.

The protein is Small ribosomal subunit protein bS16 of Spiroplasma kunkelii.